A 555-amino-acid chain; its full sequence is Formate--tetrahydrofolate ligase (555 aa).

Residue threonine 64 to threonine 71 coordinates ATP.

It belongs to the formate--tetrahydrofolate ligase family.

The catalysed reaction is (6S)-5,6,7,8-tetrahydrofolate + formate + ATP = (6R)-10-formyltetrahydrofolate + ADP + phosphate. It functions in the pathway one-carbon metabolism; tetrahydrofolate interconversion. The sequence is that of Formate--tetrahydrofolate ligase from Parabacteroides distasonis (strain ATCC 8503 / DSM 20701 / CIP 104284 / JCM 5825 / NCTC 11152).